A 93-amino-acid chain; its full sequence is NADH-ubiquinone oxidoreductase chain 4L (93 aa).

Helical transmembrane passes span 3–23 (LTIL…GPLG), 27–47 (IIKL…LIIL), and 55–75 (ILGL…SAIG).

The protein belongs to the complex I subunit 4L family.

The protein resides in the mitochondrion membrane. The catalysed reaction is a ubiquinone + NADH + 5 H(+)(in) = a ubiquinol + NAD(+) + 4 H(+)(out). Its function is as follows. Core subunit of the mitochondrial membrane respiratory chain NADH dehydrogenase (Complex I) that is believed to belong to the minimal assembly required for catalysis. Complex I functions in the transfer of electrons from NADH to the respiratory chain. The immediate electron acceptor for the enzyme is believed to be ubiquinone. The chain is NADH-ubiquinone oxidoreductase chain 4L (ND4L) from Wickerhamomyces canadensis (Yeast).